Here is a 335-residue protein sequence, read N- to C-terminus: MQVLVNKIWYEGHPLRWLLLPFSVLFALITAIRRSLFRLGLKSQTPLPVPVIVVGNITVGGSGKTPTVIYLIELLRQQGFNPGVISRGYGADMQGVKVVTAADSAASVGDEPAMIVARTGVPMVVGAKRVDTAKALLAQFAVDVIICDDGLQHYALGRDIELVVIDGKRGLGNRHLLPAGPLREGAWRLNQVDFVVVNGGPAQANQYEMQLSPSAVLPVNPKAVAVFDPTQPVVAMAGIGHPARFFETLTQQGFQLALSHGFDDHQAYDKEVLCELAASRPLMMTEKDAVKCRDFAQENWWYLAVDAKLSPQFDQQLLSRVRSVAAAKQGKSHGV.

ATP is bound at residue 58 to 65 (TVGGSGKT).

This sequence belongs to the LpxK family.

The enzyme catalyses a lipid A disaccharide + ATP = a lipid IVA + ADP + H(+). It functions in the pathway glycolipid biosynthesis; lipid IV(A) biosynthesis; lipid IV(A) from (3R)-3-hydroxytetradecanoyl-[acyl-carrier-protein] and UDP-N-acetyl-alpha-D-glucosamine: step 6/6. In terms of biological role, transfers the gamma-phosphate of ATP to the 4'-position of a tetraacyldisaccharide 1-phosphate intermediate (termed DS-1-P) to form tetraacyldisaccharide 1,4'-bis-phosphate (lipid IVA). The chain is Tetraacyldisaccharide 4'-kinase from Shewanella sp. (strain MR-4).